A 228-amino-acid polypeptide reads, in one-letter code: Glyceraldehyde 3-phosphate phosphatase (228 aa).

Belongs to the HAD-like hydrolase superfamily. It depends on Mg(2+) as a cofactor.

Catalyzes the dephosphorylation of D,L-glyceraldehyde 3-phosphate in vitro. This chain is Glyceraldehyde 3-phosphate phosphatase, found in Methanocaldococcus jannaschii (strain ATCC 43067 / DSM 2661 / JAL-1 / JCM 10045 / NBRC 100440) (Methanococcus jannaschii).